The chain runs to 102 residues: MPQPEQLPGPNADIWNWQLQGLCRGMDSSMFFHPDGERGRARTQREQRAKEMCRRCPVIEACRSHALEVGEPYGVWGGLSESERDLLLKGTMGRTRGIRRTA.

In terms of domain architecture, 4Fe-4S Wbl-type spans 22–86; sequence LCRGMDSSMF…GGLSESERDL (65 aa). [4Fe-4S] cluster-binding residues include cysteine 23, cysteine 53, cysteine 56, and cysteine 62.

The protein belongs to the WhiB family. In terms of assembly, homodimer. Interacts with the C-terminal 54 residues of sigma factor SigA (RpoV). It depends on [4Fe-4S] cluster as a cofactor. Post-translationally, the 4Fe-4S cluster interacts with NO, forming a protein-bound dinitrosyliron dithiol complex. In terms of processing, the 4Fe-4S cluster interacts with O(2), leading to its degradation. Cluster loss takes about 2 hours. Once in the apo-form the cysteines oxidize to form 2 intramolecular disulfide bonds.

The protein resides in the cytoplasm. Its function is as follows. A redox-sensitive transcriptional regulator. Maintains intracellular redox homeostasis by regulating catabolic metabolism and polyketide biosynthesis. Regulates expression of the redox buffer ergothioneine (ERG) in a carbon-source-dependent manner; loss of ERG or mycothiol (MSH, the other major redox buffer in this bacteria) leads to respiratory alterations and bioenergetic deficiencies that negatively impact virulence. In response to low external pH (like that found in host macrophage phagosomes) alters endogenous gene expression leading to acid resistance; MSH and WhiB3 are probably part of a regulatory circuit that mediates gene expression upon acid stress. Regulates pathogenic lipid synthesis, coordinating proprionate flux (and other host-derived fatty acid oxidation intermediates) into methyl-branched fatty acids (polyacyltrehalose, phthiocerol dimycocerosates, sulfolipids) and the storage lipid triacylglycerol, functioning as reductive sink. During intracellular growth M.tuberculosis uses host fatty acids as an energy source, generating large quantities of proprionate and NADH/NADPH, which are toxic and highly reducing respectively. WhiB3 is thought to help dissipate proprionate and NADH/NADPH by switching to the in vivo carbon source and via lipid anabolism. Responds to NO and O(2). Regulates expression of genes encoding modular polyketide synthases such as pks2, pks3 and fbpA. The oxidized apo-form of WhiB3 binds DNA (with 2 intramolecular disulfide bonds); holo-WhiB3 (with the 4Fe-4S cluster) binds DNA considerably less well. Discriminates poorly between specific and non-specific DNA-binding. Plays a role in virulence and nutritional stress. In its apo-form can act as a protein disulfide reductase. Functionally, may respond to mycothiol (MSH) redox potential (E-MSH) which decreases at pH 4.5 for up to 72 hours, indicative of cellular reductive stress; deletion of whiB3 leads to a lesser E-MSH at 72 hours, indicative of cellular oxidative stress. Probably via its effects on production of polyketide lipids, regulates host gene expression, leading to blockage of phagosome maturation. Equilibration of extra- and intracytoplasmic pH kills bacteria. The chain is Redox- and pH-responsive transcriptional regulator WhiB3 (whiB3) from Mycobacterium tuberculosis (strain ATCC 25618 / H37Rv).